Consider the following 1330-residue polypeptide: ABC multidrug transporter mdr4 (1330 aa).

Residue Asn3 is glycosylated (N-linked (GlcNAc...) asparagine). 6 helical membrane-spanning segments follow: residues 90 to 110 (VLLI…FPLL), 144 to 164 (VLYV…HSTC), 218 to 238 (KVGL…VAFI), 243 to 263 (IAGM…GGGH), 324 to 344 (HAAQ…LAFW), and 370 to 390 (IFVL…IHVF). An ABC transmembrane type-1 1 domain is found at 94–392 (IGGLLFAICA…VAPFIHVFAS (299 aa)). An ABC transporter 1 domain is found at 428-666 (IRFRDVHFKY…GGVYAEMVRL (239 aa)). Residue 463–470 (GPSGGGKS) coordinates ATP. A glycan (N-linked (GlcNAc...) asparagine) is linked at Asn707. The disordered stretch occupies residues 717–736 (VADTPSDSRDGSEEEARKKR). Residues 722–733 (SDSRDGSEEEAR) are compositionally biased toward basic and acidic residues. A run of 6 helical transmembrane segments spans residues 761 to 781 (LLGL…AIVF), 806 to 826 (LLFF…GCAF), 871 to 893 (ASAL…VNLI), 903 to 923 (AWKI…SGMM), 989 to 1009 (AWLA…YWWG), and 1023 to 1043 (FFIV…MFAL). The ABC transmembrane type-1 2 domain maps to 761-1049 (LLGLAMSVII…MFALAPDISK (289 aa)). An ABC transporter 2 domain is found at 1086 to 1325 (AQLRDVHFTY…SETYRTSVIH (240 aa)). Residue 1121 to 1128 (GPSGSGKS) participates in ATP binding.

Belongs to the ABC transporter superfamily. ABCB family. Multidrug resistance exporter (TC 3.A.1.201) subfamily.

It localises to the cell membrane. It carries out the reaction itraconazole(in) + ATP + H2O = itraconazole(out) + ADP + phosphate + H(+). It catalyses the reaction voriconazole(in) + ATP + H2O = voriconazole(out) + ADP + phosphate + H(+). In terms of biological role, pleiotropic ABC efflux transporter that confers resistance to azoles such as itraconazole and voriconazole. This Aspergillus fumigatus (strain ATCC MYA-4609 / CBS 101355 / FGSC A1100 / Af293) (Neosartorya fumigata) protein is ABC multidrug transporter mdr4.